Reading from the N-terminus, the 898-residue chain is DNA topoisomerase 1 (898 aa).

The Toprim domain occupies 2 to 126 (SKLVIVESPT…IKRMVFHEIT (125 aa)). Residues Glu8 and Asp95 each contribute to the Mg(2+) site. Residues 141–583 (DENLVHAQET…GFFLGESGLE (443 aa)) enclose the Topo IA-type catalytic domain. The interval 175–180 (SAGRVQ) is interaction with DNA. The active-site O-(5'-phospho-DNA)-tyrosine intermediate is Tyr320. The disordered stretch occupies residues 840–898 (AEKAGSGKKTSRKKATTTAKGTKKTTSKKASATGTAKKTTTKRTTRKKAASPDQSSEAG). Over residues 848–866 (KTSRKKATTTAKGTKKTTS) the composition is skewed to basic residues. A compositionally biased stretch (low complexity) spans 867–877 (KKASATGTAKK). Over residues 878–888 (TTTKRTTRKKA) the composition is skewed to basic residues.

This sequence belongs to the type IA topoisomerase family. Monomer. Requires Mg(2+) as cofactor.

The catalysed reaction is ATP-independent breakage of single-stranded DNA, followed by passage and rejoining.. Its function is as follows. Releases the supercoiling and torsional tension of DNA, which is introduced during the DNA replication and transcription, by transiently cleaving and rejoining one strand of the DNA duplex. Introduces a single-strand break via transesterification at a target site in duplex DNA. The scissile phosphodiester is attacked by the catalytic tyrosine of the enzyme, resulting in the formation of a DNA-(5'-phosphotyrosyl)-enzyme intermediate and the expulsion of a 3'-OH DNA strand. The free DNA strand then undergoes passage around the unbroken strand, thus removing DNA supercoils. Finally, in the religation step, the DNA 3'-OH attacks the covalent intermediate to expel the active-site tyrosine and restore the DNA phosphodiester backbone. In Synechocystis sp. (strain ATCC 27184 / PCC 6803 / Kazusa), this protein is DNA topoisomerase 1.